The following is a 413-amino-acid chain: Pyruvate dehydrogenase complex subunit homolog DDB_G0271564, mitochondrial (413 aa).

The N-terminal 19 residues, 1-19 (MNRILKQVSNTKGKGIRFY), are a transit peptide targeting the mitochondrion. One can recognise a Peripheral subunit-binding (PSBD) domain in the interval 29–67 (YMFPSVRRLLVEYGINSSKEVTATGPQNRLLKGDVLAYI).

The protein belongs to the 2-oxoacid dehydrogenase family.

It localises to the mitochondrion. In terms of biological role, the pyruvate dehydrogenase complex catalyzes the overall conversion of pyruvate to acetyl-CoA and CO(2). It contains multiple copies of three enzymatic components: pyruvate dehydrogenase (E1), dihydrolipoamide acetyltransferase (E2) and lipoamide dehydrogenase (E3). In Dictyostelium discoideum (Social amoeba), this protein is Pyruvate dehydrogenase complex subunit homolog DDB_G0271564, mitochondrial (pdhX).